We begin with the raw amino-acid sequence, 315 residues long: MPWGIAISILVDLILGDPKDLPHPVRAIGKLARALEKFFRNNCSSEEIAGILTSCLVYLISFIIPFLSVQFANQLHWILGELLSIMIIYTTIAIRDMIDHSKEVYDALVQTNLPLARKKVSKIVARDTENLSESEIIRACVESTAENLVDGITTPLFYAVFGGPAWAMLYRSINTLDSLFGYKNKKYLRFGSFPARIDDLANYLPARITSYILVLSSLFLGYNFKNSLYILQRDGKKHPSPNSGLTEAAVAGALEIQLGGVNLYSGVQNIKPKLGDPKKEFQIEQILQTNKLILLSSILTFIFYILIYSGAAYFL.

5 helical membrane-spanning segments follow: residues 48–70 (IAGI…LSVQ), 75–94 (LHWI…TIAI), 148–170 (LVDG…AMLY), 208–230 (ITSY…SLYI), and 292–314 (LILL…AAYF).

It belongs to the CobD/CbiB family.

The protein localises to the cell membrane. Its pathway is cofactor biosynthesis; adenosylcobalamin biosynthesis. Its function is as follows. Converts cobyric acid to cobinamide by the addition of aminopropanol on the F carboxylic group. This Leptospira interrogans serogroup Icterohaemorrhagiae serovar copenhageni (strain Fiocruz L1-130) protein is Cobalamin biosynthesis protein CobD.